The sequence spans 610 residues: Replication factor C large subunit (610 aa).

ATP is bound at residue 55–62 (GPAGIGKT). Composition is skewed to basic and acidic residues over residues 467 to 478 (EKEGNASAEKPE), 502 to 515 (LPEK…KLPE), and 594 to 603 (DGSKKAEPKN). The tract at residues 467-610 (EKEGNASAEK…PKNQKTLFDF (144 aa)) is disordered.

This sequence belongs to the activator 1 small subunits family. RfcL subfamily. In terms of assembly, heteromultimer composed of small subunits (RfcS) and large subunits (RfcL).

Functionally, part of the RFC clamp loader complex which loads the PCNA sliding clamp onto DNA. The polypeptide is Replication factor C large subunit (Methanosarcina mazei (strain ATCC BAA-159 / DSM 3647 / Goe1 / Go1 / JCM 11833 / OCM 88) (Methanosarcina frisia)).